A 294-amino-acid polypeptide reads, in one-letter code: uncharacterized protein (294 aa).

The signal sequence occupies residues 1 to 19 (MFKRSLFILLLLAASLVKA).

This is an uncharacterized protein from Rickettsia felis (strain ATCC VR-1525 / URRWXCal2) (Rickettsia azadi).